The following is a 78-amino-acid chain: Large ribosomal subunit protein bL28 (78 aa).

Residues 1-23 (MSRVCQVSGKRVQTGNNVSHANN) are disordered. The segment covering 11–22 (RVQTGNNVSHAN) has biased composition (polar residues).

This sequence belongs to the bacterial ribosomal protein bL28 family.

The sequence is that of Large ribosomal subunit protein bL28 from Stenotrophomonas maltophilia (strain R551-3).